The following is a 186-amino-acid chain: Ribosome-recycling factor (186 aa).

Belongs to the RRF family.

The protein resides in the cytoplasm. In terms of biological role, responsible for the release of ribosomes from messenger RNA at the termination of protein biosynthesis. May increase the efficiency of translation by recycling ribosomes from one round of translation to another. The sequence is that of Ribosome-recycling factor from Chlorobium limicola (strain DSM 245 / NBRC 103803 / 6330).